A 187-amino-acid polypeptide reads, in one-letter code: UPF0301 protein YqgE (187 aa).

The protein belongs to the UPF0301 (AlgH) family.

This is UPF0301 protein YqgE from Salmonella heidelberg (strain SL476).